Reading from the N-terminus, the 949-residue chain is AP-1 complex subunit beta-1 (949 aa).

Lys318 bears the N6-acetyllysine mark. Residue Tyr574 is modified to 3'-nitrotyrosine. The tract at residues 584-625 (GGRGVVHKSLPPRTASSESAESPETAPTGAPPGEQPDVIPAQ) is disordered. The segment covering 594 to 611 (PPRTASSESAESPETAPT) has biased composition (low complexity).

Belongs to the adaptor complexes large subunit family. In terms of assembly, adaptor protein complex 1 (AP-1) is a heterotetramer composed of two large adaptins (gamma-type subunit AP1G1 and beta-type subunit AP1B1), a medium adaptin (mu-type subunit AP1M1 or AP1M2) and a small adaptin (sigma-type subunit AP1S1 or AP1S2 or AP1S3). As to expression, widely expressed.

The protein localises to the golgi apparatus. It is found in the cytoplasmic vesicle. The protein resides in the clathrin-coated vesicle membrane. Functionally, subunit of clathrin-associated adaptor protein complex 1 that plays a role in protein sorting in the late-Golgi/trans-Golgi network (TGN) and/or endosomes. The AP complexes mediate both the recruitment of clathrin to membranes and the recognition of sorting signals within the cytosolic tails of transmembrane cargo molecules. This Homo sapiens (Human) protein is AP-1 complex subunit beta-1 (AP1B1).